The chain runs to 140 residues: Nucleoside diphosphate kinase (140 aa).

The ATP site is built by Lys-11, Phe-59, Arg-87, Thr-93, Arg-104, and Asn-114. His-117 serves as the catalytic Pros-phosphohistidine intermediate.

This sequence belongs to the NDK family. Homotetramer. Mg(2+) serves as cofactor.

It localises to the cytoplasm. The catalysed reaction is a 2'-deoxyribonucleoside 5'-diphosphate + ATP = a 2'-deoxyribonucleoside 5'-triphosphate + ADP. It carries out the reaction a ribonucleoside 5'-diphosphate + ATP = a ribonucleoside 5'-triphosphate + ADP. Functionally, major role in the synthesis of nucleoside triphosphates other than ATP. The ATP gamma phosphate is transferred to the NDP beta phosphate via a ping-pong mechanism, using a phosphorylated active-site intermediate. In Methylorubrum populi (strain ATCC BAA-705 / NCIMB 13946 / BJ001) (Methylobacterium populi), this protein is Nucleoside diphosphate kinase.